The following is a 264-amino-acid chain: Thymidylate synthase (264 aa).

Residues arginine 21 and 126–127 contribute to the dUMP site; that span reads RR. Residue cysteine 146 is the Nucleophile of the active site. DUMP is bound by residues 166-169, asparagine 177, and 207-209; these read RSAD and HLY. Aspartate 169 contributes to the (6R)-5,10-methylene-5,6,7,8-tetrahydrofolate binding site. Alanine 263 contacts (6R)-5,10-methylene-5,6,7,8-tetrahydrofolate.

Belongs to the thymidylate synthase family. Bacterial-type ThyA subfamily. In terms of assembly, homodimer.

Its subcellular location is the cytoplasm. It carries out the reaction dUMP + (6R)-5,10-methylene-5,6,7,8-tetrahydrofolate = 7,8-dihydrofolate + dTMP. Its pathway is pyrimidine metabolism; dTTP biosynthesis. Its function is as follows. Catalyzes the reductive methylation of 2'-deoxyuridine-5'-monophosphate (dUMP) to 2'-deoxythymidine-5'-monophosphate (dTMP) while utilizing 5,10-methylenetetrahydrofolate (mTHF) as the methyl donor and reductant in the reaction, yielding dihydrofolate (DHF) as a by-product. This enzymatic reaction provides an intracellular de novo source of dTMP, an essential precursor for DNA biosynthesis. The chain is Thymidylate synthase from Bradyrhizobium sp. (strain BTAi1 / ATCC BAA-1182).